The sequence spans 462 residues: Nitrate/nitrite transporter NarU (462 aa).

The Cytoplasmic portion of the chain corresponds to 1–35 (MTRQNENYNRYLLSDWRPENPAFWENKGKGIARRN). The chain crosses the membrane as a helical span at residues 36 to 56 (LWISVSCLLLAFCVWMLFSAV). Residues 57 to 71 (AVNLNKIGFNFTTDQ) lie on the Periplasmic side of the membrane. The helical transmembrane segment at 72 to 92 (LFLLTALPSLSGAILRVPYSF) threads the bilayer. At 93-101 (MVPLFGGRK) the chain is on the cytoplasmic side. The chain crosses the membrane as a helical span at residues 102–122 (WTVLSTVILIIPCAWLGFAVQ). Topologically, residues 123–124 (NP) are periplasmic. The helical transmembrane segment at 125–145 (ATPFGVFMLIALLCGFAGANF) threads the bilayer. Residues 146–180 (ASSMGNISFFFPKARQGSALGINGGLGNLGVSVMQ) lie on the Cytoplasmic side of the membrane. A helical membrane pass occupies residues 181–201 (LIAPLVIFLPIFTFLGVQGVP). At 202–206 (QPDGS) the chain is on the periplasmic side. Residues 207-227 (LLALTNAAWIWVPLLAVATLA) form a helical membrane-spanning segment. At 228–258 (AWFGMNDIGSSKASVASQLPVLKRLHLWLLS) the chain is on the cytoplasmic side. A helical membrane pass occupies residues 259-279 (LLYLATFGSFIGFSAGFAMLA). Residues 280–287 (KTQFPDVN) lie on the Periplasmic side of the membrane. The helical transmembrane segment at 288–308 (ILQLAFFGPFIGALARSAGGV) threads the bilayer. The Cytoplasmic portion of the chain corresponds to 309–317 (ISDKFGGVR). The chain crosses the membrane as a helical span at residues 318-338 (VTLINFIFMALFTALLFLTLP). The Periplasmic segment spans residues 339–341 (GSG). A helical membrane pass occupies residues 342-362 (AGSFSAFYLVFMGLFLTAGLG). The Cytoplasmic segment spans residues 363–401 (SGSTFQMIAVIFRQITLYNVKLRGGSDEQAQREAVTDTA). Residues 402–422 (AALGFISAIGAVGGFFIPKAF) form a helical membrane-spanning segment. Residues 423 to 432 (GTSLALTGSP) are Periplasmic-facing. Residues 433–453 (VGAMKIFLLFYLACVLLTWLV) traverse the membrane as a helical segment. The Cytoplasmic segment spans residues 454–462 (YGRRKPKQQ).

Belongs to the major facilitator superfamily. Nitrate/nitrite porter (TC 2.A.1.8) family.

The protein localises to the cell inner membrane. In terms of biological role, catalyzes nitrate uptake, nitrite uptake and nitrite export across the cytoplasmic membrane. This chain is Nitrate/nitrite transporter NarU (narU), found in Salmonella typhimurium (strain LT2 / SGSC1412 / ATCC 700720).